The primary structure comprises 253 residues: Coenzyme F420:L-glutamate ligase (253 aa).

Residues 9-12 (LPEI), 38-39 (ST), and lysine 43 each bind GTP. Aspartate 113 is an a divalent metal cation binding site. Asparagine 116 lines the GTP pocket. A divalent metal cation-binding residues include aspartate 150, threonine 151, and glutamate 208. GTP is bound at residue 206-213 (SGEGDDGT).

This sequence belongs to the CofE family. Homodimer. Requires Mg(2+) as cofactor. The cofactor is Mn(2+). K(+) serves as cofactor.

The enzyme catalyses oxidized coenzyme F420-0 + GTP + L-glutamate = oxidized coenzyme F420-1 + GDP + phosphate + H(+). The catalysed reaction is oxidized coenzyme F420-1 + GTP + L-glutamate = oxidized coenzyme F420-2 + GDP + phosphate + H(+). It participates in cofactor biosynthesis; coenzyme F420 biosynthesis. Catalyzes the GTP-dependent successive addition of two or more gamma-linked L-glutamates to the L-lactyl phosphodiester of 7,8-didemethyl-8-hydroxy-5-deazariboflavin (F420-0) to form coenzyme F420-0-glutamyl-glutamate (F420-2) or polyglutamated F420 derivatives. The protein is Coenzyme F420:L-glutamate ligase of Halobacterium salinarum (strain ATCC 29341 / DSM 671 / R1).